The chain runs to 190 residues: dCTP deaminase (190 aa).

Residue 113-118 coordinates dCTP; sequence KSTYAR. The Proton donor/acceptor role is filled by E139. DCTP contacts are provided by Q158, Y172, K181, and Q182.

It belongs to the dCTP deaminase family. Homotrimer.

It catalyses the reaction dCTP + H2O + H(+) = dUTP + NH4(+). It functions in the pathway pyrimidine metabolism; dUMP biosynthesis; dUMP from dCTP (dUTP route): step 1/2. In terms of biological role, catalyzes the deamination of dCTP to dUTP. The protein is dCTP deaminase of Chlamydia muridarum (strain MoPn / Nigg).